A 414-amino-acid polypeptide reads, in one-letter code: Putative F-box/kelch-repeat protein At2g29800 (414 aa).

The disordered stretch occupies residues 1-61 (MASISETSDD…EVENVPPIPR (61 aa)). A compositionally biased stretch (basic and acidic residues) spans 20 to 35 (KPEEPHKNPQEEKENQ). A compositionally biased stretch (acidic residues) spans 40–54 (NEADEEDDHQDEEVE). The F-box domain occupies 58-105 (PIPRKIPPVLIENTIAPLRRCHYPKLSLLSNAFRQVISSEDLFQVRSL). 4 Kelch repeats span residues 163–211 (KIYV…VIDG), 212–258 (RIYV…IVHV), 263–302 (KIYI…SCVV), and 305–349 (LLYA…SKMA).

This chain is Putative F-box/kelch-repeat protein At2g29800, found in Arabidopsis thaliana (Mouse-ear cress).